A 329-amino-acid chain; its full sequence is Protein-arginine N-acetylglucosaminyltransferase NleB (329 aa).

N-beta-linked (GlcNAc) arginine; by autocatalysis glycosylation is present at arginine 13. 48–50 (QWF) provides a ligand contact to UDP-N-acetyl-alpha-D-glucosamine. Arginine 53 carries an N-beta-linked (GlcNAc) arginine; by autocatalysis glycan. Tyrosine 72 is a binding site for UDP-N-acetyl-alpha-D-glucosamine. An N-beta-linked (GlcNAc) arginine; by autocatalysis glycan is attached at arginine 159. 219-222 (YLDA) serves as a coordination point for UDP-N-acetyl-alpha-D-glucosamine. Positions 221-223 (DAD) match the DXD motif motif. Aspartate 223 provides a ligand contact to Mn(2+). Residue glutamate 253 is the Proton acceptor of the active site. The N-beta-linked (GlcNAc) arginine; by autocatalysis glycan is linked to arginine 293. Mn(2+) is bound by residues asparagine 320 and serine 322. Residues serine 322 and 327–329 (SSW) contribute to the UDP-N-acetyl-alpha-D-glucosamine site.

The protein belongs to the glycosyltransferase NleB family. It depends on Mn(2+) as a cofactor. Post-translationally, auto-glycosylated: arginine GlcNAcylation is required for activity toward death domain-containing host target proteins.

It localises to the secreted. Its subcellular location is the host cell. It catalyses the reaction L-arginyl-[protein] + UDP-N-acetyl-alpha-D-glucosamine = N(omega)-(N-acetyl-beta-D-glucosaminyl)-L-arginyl-[protein] + UDP + H(+). In terms of biological role, protein-arginine N-acetylglucosaminyltransferase effector that disrupts TNF signaling in infected cells, including NF-kappa-B signaling, apoptosis and necroptosis. Acts by catalyzing the transfer of a single N-acetylglucosamine (GlcNAc) to a conserved arginine residue in the death domain of host proteins FADD, TNFRSF1A and RIPK1: arginine GlcNAcylation prevents homotypic/heterotypic death domain interactions and assembly of the oligomeric TNF-alpha receptor complex, thereby disrupting TNF signaling. Has preference for host FADD as substrate compared to TNFRSF1A and RIPK1. Also acts on host proteins without a death domain: catalyzes GlcNAcylation of host GAPDH protein, thereby preventing GAPDH interaction with TRAF2 and TRAF3, leading to inhibit NF-kappa-B signaling and type I interferon production, respectively. Also displays intra-bacterial activity by mediating GlcNAcylation of glutathione synthetase GshB. Catalyzes auto-GlcNAcylation, which is required for activity toward death domain-containing host target proteins. In Citrobacter rodentium, this protein is Protein-arginine N-acetylglucosaminyltransferase NleB.